Reading from the N-terminus, the 811-residue chain is Probable inorganic carbon transporter subunit DabA (811 aa).

The Zn(2+) site is built by Cys-336, Asp-338, His-498, and Cys-513.

It belongs to the inorganic carbon transporter (TC 9.A.2) DabA family. As to quaternary structure, forms a complex with DabB. Requires Zn(2+) as cofactor.

The protein localises to the cell inner membrane. Part of an energy-coupled inorganic carbon pump. The polypeptide is Probable inorganic carbon transporter subunit DabA (Rhodospirillum centenum (strain ATCC 51521 / SW)).